Here is an 88-residue protein sequence, read N- to C-terminus: UPF0298 protein BC_3932 (88 aa).

This sequence belongs to the UPF0298 family.

The protein resides in the cytoplasm. The chain is UPF0298 protein BC_3932 from Bacillus cereus (strain ATCC 14579 / DSM 31 / CCUG 7414 / JCM 2152 / NBRC 15305 / NCIMB 9373 / NCTC 2599 / NRRL B-3711).